A 266-amino-acid chain; its full sequence is Putative [LysW]-aminoadipate/[LysW]-glutamate kinase (266 aa).

Residues 36 to 37 (GG), arginine 63, and asparagine 168 each bind substrate.

Belongs to the acetylglutamate kinase family. LysZ subfamily.

It localises to the cytoplasm. The catalysed reaction is [amino-group carrier protein]-C-terminal-N-(1,4-dicarboxybutan-1-yl)-L-glutamine + ATP = [amino-group carrier protein]-C-terminal-N-(1-carboxy-5-phosphooxy-5-oxopentan-1-yl)-L-glutamine + ADP. It carries out the reaction [amino-group carrier protein]-C-terminal-gamma-(L-glutamyl)-L-glutamate + ATP = [amino-group carrier protein]-C-terminal-gamma-(5-phospho-L-glutamyl)-L-glutamate + ADP. The protein operates within amino-acid biosynthesis; L-lysine biosynthesis via AAA pathway; L-lysine from L-alpha-aminoadipate (Thermus route): step 2/5. It participates in amino-acid biosynthesis; L-arginine biosynthesis. In terms of biological role, involved in both the arginine and lysine biosynthetic pathways. Phosphorylates the LysW-bound precursors glutamate (for arginine biosynthesis), respectively alpha-aminoadipate (for lysine biosynthesis). This is Putative [LysW]-aminoadipate/[LysW]-glutamate kinase from Cenarchaeum symbiosum (strain A).